The primary structure comprises 693 residues: Elongation factor G (693 aa).

Positions 8 to 284 (DMTRNVGIMA…AIVNYMPAPT (277 aa)) constitute a tr-type G domain. GTP is bound by residues 17–24 (AHIDAGKT), 81–85 (DTPGH), and 135–138 (NKMD).

Belongs to the TRAFAC class translation factor GTPase superfamily. Classic translation factor GTPase family. EF-G/EF-2 subfamily.

It is found in the cytoplasm. Functionally, catalyzes the GTP-dependent ribosomal translocation step during translation elongation. During this step, the ribosome changes from the pre-translocational (PRE) to the post-translocational (POST) state as the newly formed A-site-bound peptidyl-tRNA and P-site-bound deacylated tRNA move to the P and E sites, respectively. Catalyzes the coordinated movement of the two tRNA molecules, the mRNA and conformational changes in the ribosome. In Fusobacterium nucleatum subsp. nucleatum (strain ATCC 25586 / DSM 15643 / BCRC 10681 / CIP 101130 / JCM 8532 / KCTC 2640 / LMG 13131 / VPI 4355), this protein is Elongation factor G.